Here is a 274-residue protein sequence, read N- to C-terminus: Formamidopyrimidine-DNA glycosylase (274 aa).

The active-site Schiff-base intermediate with DNA is Pro-2. The active-site Proton donor is Glu-3. Lys-56 acts as the Proton donor; for beta-elimination activity in catalysis. Residues His-89, Arg-107, and Lys-148 each contribute to the DNA site. The FPG-type zinc-finger motif lies at 233 to 267 (LAYGRAREMCVNCETTLENLKLGQRASVFCPQCQP). Arg-257 (proton donor; for delta-elimination activity) is an active-site residue.

Belongs to the FPG family. Monomer. Zn(2+) is required as a cofactor.

The catalysed reaction is Hydrolysis of DNA containing ring-opened 7-methylguanine residues, releasing 2,6-diamino-4-hydroxy-5-(N-methyl)formamidopyrimidine.. The enzyme catalyses 2'-deoxyribonucleotide-(2'-deoxyribose 5'-phosphate)-2'-deoxyribonucleotide-DNA = a 3'-end 2'-deoxyribonucleotide-(2,3-dehydro-2,3-deoxyribose 5'-phosphate)-DNA + a 5'-end 5'-phospho-2'-deoxyribonucleoside-DNA + H(+). In terms of biological role, involved in base excision repair of DNA damaged by oxidation or by mutagenic agents. Acts as a DNA glycosylase that recognizes and removes damaged bases. Has a preference for oxidized purines, such as 7,8-dihydro-8-oxoguanine (8-oxoG). Has AP (apurinic/apyrimidinic) lyase activity and introduces nicks in the DNA strand. Cleaves the DNA backbone by beta-delta elimination to generate a single-strand break at the site of the removed base with both 3'- and 5'-phosphates. In Acinetobacter baumannii (strain SDF), this protein is Formamidopyrimidine-DNA glycosylase.